A 622-amino-acid chain; its full sequence is Cytochrome c oxidase subunit 1 (622 aa).

Over 1-27 the chain is Extracellular; the sequence is MLNALTEKRTRGSMLWDYLTTVDHKKI. The chain crosses the membrane as a helical span at residues 28 to 46; that stretch reads AILYLVAGGFFFLVGGIEA. Topologically, residues 47–68 are cytoplasmic; the sequence is MFIRIQLAKPENAFLSAQAYNE. Residues 69-88 traverse the membrane as a helical segment; sequence VMTMHGTTMIFLAAMPLLFA. Residue H73 participates in Fe(II)-heme a binding. At 89 to 110 the chain is on the extracellular side; the sequence is LMNAVVPLQIGARDVSFPFLNA. The chain crosses the membrane as a helical span at residues 111-128; it reads LGFWLFFFGGIFLNLSWF. Residues 129 to 159 are Cytoplasmic-facing; the sequence is LGGAPDAGWTSYASLSLHSKGHGIDFFVLGL. A helical transmembrane segment spans residues 160–178; the sequence is QISGLGTLIAGINFLATII. At 179 to 196 the chain is on the extracellular side; that stretch reads NMRAPGMTYMRLPLFTWT. A helical membrane pass occupies residues 197–215; it reads TFVASALILFAFPPLTVGL. Topologically, residues 216 to 241 are cytoplasmic; it reads ALMMLDRLFGTNFFNPELGGNTVIWE. Residues 242-261 form a helical membrane-spanning segment; sequence HLFWIFGHPEVYILILPAFG. Residues H249 and Y253 each contribute to the Cu cation site. The segment at residues 249-253 is a cross-link (1'-histidyl-3'-tyrosine (His-Tyr)); the sequence is HPEVY. Residues 262–284 lie on the Extracellular side of the membrane; the sequence is IFSEVIPVFARKRLFGYSSMVFA. The helical transmembrane segment at 285 to 304 threads the bilayer; it reads IVLIGFLGFMVWVHHMFTTG. The Cu cation site is built by H298 and H299. The Cytoplasmic segment spans residues 305-312; it reads LGPIANAI. A helical membrane pass occupies residues 313–331; sequence FAVATMAIAIPTGIKIFNW. At 332 to 346 the chain is on the extracellular side; that stretch reads LLTIWGGNVKYTTAM. The chain crosses the membrane as a helical span at residues 347–366; the sequence is LYAVSFIPSFVLGGVTGVML. Residues 367–374 lie on the Cytoplasmic side of the membrane; that stretch reads AAAAADYQ. The chain crosses the membrane as a helical span at residues 375–394; sequence FHDTYFVVAHFHYVIIGGVV. H384 contributes to the heme a3 binding site. H386 contributes to the Fe(II)-heme a binding site. Residues 395-421 lie on the Extracellular side of the membrane; sequence FGLLAGVHFWWPKMFGKILHETMGKIS. Residues 422–441 traverse the membrane as a helical segment; that stretch reads FVLFFIGFHLTFFIQHFVGL. The Cytoplasmic portion of the chain corresponds to 442 to 459; the sequence is MGMPRRVYTFLPGQGLET. A helical transmembrane segment spans residues 460–479; that stretch reads GNLISTIGAFFMAAAVILLL. Topologically, residues 480-552 are extracellular; sequence VNVIWTSVKG…EPVDDIHMPN (73 aa). A helical membrane pass occupies residues 553 to 572; sequence GSILPLIISFGLFVAAFGLL. Over 573-580 the chain is Cytoplasmic; the sequence is YRSDYAWG. A helical transmembrane segment spans residues 581-604; it reads LPVIFIGLGITFITMLLRSVIDDH. The Cytoplasmic portion of the chain corresponds to 605–622; the sequence is GYHIHKEELPNDDKGVKA.

Belongs to the heme-copper respiratory oxidase family. Requires Cu(2+) as cofactor. Heme is required as a cofactor.

Its subcellular location is the cell membrane. It catalyses the reaction 4 Fe(II)-[cytochrome c] + O2 + 8 H(+)(in) = 4 Fe(III)-[cytochrome c] + 2 H2O + 4 H(+)(out). It participates in energy metabolism; oxidative phosphorylation. Cytochrome c oxidase is the component of the respiratory chain that catalyzes the reduction of oxygen to water. Subunits 1-3 form the functional core of the enzyme complex. Co I is the catalytic subunit of the enzyme. Electrons originating in cytochrome c are transferred via the copper A center of subunit 2 and heme a of subunit 1 to the bimetallic center formed by heme a3 and copper B. This cytochrome c oxidase shows proton pump activity across the membrane in addition to the electron transfer. The sequence is that of Cytochrome c oxidase subunit 1 (ctaD) from Bacillus subtilis (strain 168).